Consider the following 131-residue polypeptide: MNYEVNKSDEDWKKELTPEQYRILRQKGTEMAFTGALYKNQDKGTYVCAACGAVLFSSDTKYESGSGWPSFYQPVKDGVVDKQKDSSHGMERTEILCSKCGGHLGHVFNDGPRPTGLRYCINSASLKFQKE.

In terms of domain architecture, MsrB spans 9 to 131; sequence DEDWKKELTP…NSASLKFQKE (123 aa). Residues cysteine 48, cysteine 51, cysteine 97, and cysteine 100 each contribute to the Zn(2+) site. The Nucleophile role is filled by cysteine 120.

This sequence belongs to the MsrB Met sulfoxide reductase family. Zn(2+) is required as a cofactor.

It catalyses the reaction L-methionyl-[protein] + [thioredoxin]-disulfide + H2O = L-methionyl-(R)-S-oxide-[protein] + [thioredoxin]-dithiol. The chain is Peptide methionine sulfoxide reductase MsrB from Leptospira interrogans serogroup Icterohaemorrhagiae serovar Lai (strain 56601).